A 178-amino-acid polypeptide reads, in one-letter code: Phosphopantetheine adenylyltransferase (178 aa).

Position 8 (serine 8) interacts with substrate. ATP is bound by residues 8–9 (SF) and histidine 16. Substrate contacts are provided by lysine 40, threonine 72, and arginine 86. ATP-binding positions include 87 to 89 (GLR), glutamate 97, and 122 to 128 (YSFLSSS).

This sequence belongs to the bacterial CoaD family. As to quaternary structure, homohexamer. Mg(2+) is required as a cofactor.

It localises to the cytoplasm. The catalysed reaction is (R)-4'-phosphopantetheine + ATP + H(+) = 3'-dephospho-CoA + diphosphate. Its pathway is cofactor biosynthesis; coenzyme A biosynthesis; CoA from (R)-pantothenate: step 4/5. Functionally, reversibly transfers an adenylyl group from ATP to 4'-phosphopantetheine, yielding dephospho-CoA (dPCoA) and pyrophosphate. This Picosynechococcus sp. (strain ATCC 27264 / PCC 7002 / PR-6) (Agmenellum quadruplicatum) protein is Phosphopantetheine adenylyltransferase.